Reading from the N-terminus, the 294-residue chain is 4-hydroxy-tetrahydrodipicolinate synthase (294 aa).

Thr47 serves as a coordination point for pyruvate. The Proton donor/acceptor role is filled by Tyr135. Lys164 serves as the catalytic Schiff-base intermediate with substrate. Val206 contacts pyruvate.

This sequence belongs to the DapA family. In terms of assembly, homotetramer; dimer of dimers.

The protein localises to the cytoplasm. The catalysed reaction is L-aspartate 4-semialdehyde + pyruvate = (2S,4S)-4-hydroxy-2,3,4,5-tetrahydrodipicolinate + H2O + H(+). It participates in amino-acid biosynthesis; L-lysine biosynthesis via DAP pathway; (S)-tetrahydrodipicolinate from L-aspartate: step 3/4. Catalyzes the condensation of (S)-aspartate-beta-semialdehyde [(S)-ASA] and pyruvate to 4-hydroxy-tetrahydrodipicolinate (HTPA). This chain is 4-hydroxy-tetrahydrodipicolinate synthase, found in Lachnoclostridium phytofermentans (strain ATCC 700394 / DSM 18823 / ISDg) (Clostridium phytofermentans).